A 282-amino-acid chain; its full sequence is Protein-glutamine deamidase Cif (282 aa).

The tract at residues 1 to 16 is translocation domain (TD); that stretch reads MKDITLPPPTSASCLT. Residues cysteine 109, histidine 165, and glutamine 185 contribute to the active site.

It belongs to the Cif family.

It localises to the secreted. The protein resides in the host nucleus. The catalysed reaction is L-glutaminyl-[protein] + H2O = L-glutamyl-[protein] + NH4(+). Functionally, protein-glutamine deamidase effector that inhibits the host cell cycle and other key cellular processes such as the actin network and programmed-cell death. Acts by mediating the side chain deamidation of 'Gln-40' of host NEDD8, converting it to glutamate, thereby abolishing the activity of cullin-RING-based E3 ubiquitin-protein ligase complexes (CRL complexes). Inactivation of CRL complexes prevents ubiquitination and subsequent degradation of the cyclin-dependent kinase inhibitors CDKN1A/p21 and CDKN1B/p27, leading to G1 and G2 cell cycle arrests in host cells. Also able to catalyze deamidation of 'Gln-40' of host ubiquitin in vitro; however, NEDD8 constitutes the preferred substrate in vivo. This chain is Protein-glutamine deamidase Cif, found in Escherichia coli.